The following is a 901-amino-acid chain: HTH-type transcriptional regulator MalT (901 aa).

Position 39 to 46 (39 to 46 (SPAGYGKT)) interacts with ATP. Residues 829-894 (ELIRTSPLTQ…DAVQHAQQLL (66 aa)) form the HTH luxR-type domain. The H-T-H motif DNA-binding region spans 853 to 872 (NEQIAGELAVAATTIKTHIR).

Belongs to the MalT family. In terms of assembly, monomer in solution. Oligomerizes to an active state in the presence of the positive effectors ATP and maltotriose.

With respect to regulation, activated by ATP and maltotriose, which are both required for DNA binding. Functionally, positively regulates the transcription of the maltose regulon whose gene products are responsible for uptake and catabolism of malto-oligosaccharides. Specifically binds to the promoter region of its target genes, recognizing a short DNA motif called the MalT box. The protein is HTH-type transcriptional regulator MalT of Salmonella gallinarum (strain 287/91 / NCTC 13346).